A 54-amino-acid chain; its full sequence is uncharacterized protein (54 aa).

This is an uncharacterized protein from Bacillus subtilis (strain 168).